A 267-amino-acid chain; its full sequence is 4,5-DOPA dioxygenase extradiol (267 aa).

Zn(2+)-binding residues include histidine 9, histidine 47, histidine 168, and histidine 222.

Belongs to the DODA-type extradiol aromatic ring-opening dioxygenase family. Zn(2+) is required as a cofactor. It depends on Fe(2+) as a cofactor. As to expression, expressed in petals. Not detected in leaves, stems and roots.

The protein localises to the cytoplasm. The catalysed reaction is L-dopa + O2 = 4-(L-alanin-3-yl)-2-hydroxy-cis,cis-muconate 6-semialdehyde + H(+). The protein operates within pigment biosynthesis; betalain biosynthesis. Opens the cyclic ring of dihydroxy-phenylalanine (DOPA) between carbons 4 and 5, thus producing an unstable seco-DOPA that rearranges nonenzymatically to betalamic acid. Produces mainly (S)-betalamic acid. Required for the coloration of flowers. This Mirabilis jalapa (Garden four-o'clock) protein is 4,5-DOPA dioxygenase extradiol (DOD).